Here is an 89-residue protein sequence, read N- to C-terminus: Small ribosomal subunit protein uS15 (89 aa).

This sequence belongs to the universal ribosomal protein uS15 family. As to quaternary structure, part of the 30S ribosomal subunit. Forms a bridge to the 50S subunit in the 70S ribosome, contacting the 23S rRNA.

Its function is as follows. One of the primary rRNA binding proteins, it binds directly to 16S rRNA where it helps nucleate assembly of the platform of the 30S subunit by binding and bridging several RNA helices of the 16S rRNA. Functionally, forms an intersubunit bridge (bridge B4) with the 23S rRNA of the 50S subunit in the ribosome. The chain is Small ribosomal subunit protein uS15 from Sinorhizobium medicae (strain WSM419) (Ensifer medicae).